A 110-amino-acid polypeptide reads, in one-letter code: Nucleoid-associated protein Sfum_2790 (110 aa).

It belongs to the YbaB/EbfC family. As to quaternary structure, homodimer.

It localises to the cytoplasm. The protein localises to the nucleoid. Functionally, binds to DNA and alters its conformation. May be involved in regulation of gene expression, nucleoid organization and DNA protection. The chain is Nucleoid-associated protein Sfum_2790 from Syntrophobacter fumaroxidans (strain DSM 10017 / MPOB).